We begin with the raw amino-acid sequence, 399 residues long: MQLENIKKLQDLDVKGKTVLVRVDYNVPLKDGKVDNNKRIVASEKTVKYLLDNNCKVVLMSHLGRPKGKVASEFSLAPVATEVANVFGVKVHFASDCIGEPAAKTIAEAKNGEIVLLENLRFHPEEEKNDETFAAQLAKNGEVFVQEAFGTVHRAHASTSAVTKFLNGGIGYLVQKEVQFLGDALAKPNRPFAAIIGGAKVSDKIMVLNTLLSKVNVLVIGGGMAYTFLKAQGYTTGKSLLEEDKVEEANKILATAKEKGVEILLPVDHVCSTEFSNESPVMTTENANIPEGQMGLDIGPKTIALFDKKLLECKTIFWNGPVGVFEMSNFEKGSFAIASSMVEATKLGATTIIGGGDSLNVLKKAKIKTDLLSHCSTGGGASMEFVEGKELPGLTALAK.

Residues 24 to 26, arginine 39, 62 to 65, arginine 121, and arginine 154 contribute to the substrate site; these read DYN and HLGR. Residues lysine 204, glycine 295, glutamate 326, and 355–358 each bind ATP; that span reads GGDS.

Belongs to the phosphoglycerate kinase family. Monomer.

The protein localises to the cytoplasm. The enzyme catalyses (2R)-3-phosphoglycerate + ATP = (2R)-3-phospho-glyceroyl phosphate + ADP. It functions in the pathway carbohydrate degradation; glycolysis; pyruvate from D-glyceraldehyde 3-phosphate: step 2/5. In Elusimicrobium minutum (strain Pei191), this protein is Phosphoglycerate kinase.